Consider the following 142-residue polypeptide: MPPKKKVTGLIKLQIQAGQANPAPPVGPALGQHGVNIMEFCKAYNAATESQRGNVIPVEITVYEDRSFTFALKTPPAAKLLLKAAGVPKGSGEPHKTKVAKVTWDQVREIAETKKEDLNANDIDQAAKIIAGTARSMGITVE.

The protein belongs to the universal ribosomal protein uL11 family. As to quaternary structure, part of the ribosomal stalk of the 50S ribosomal subunit. Interacts with L10 and the large rRNA to form the base of the stalk. L10 forms an elongated spine to which L12 dimers bind in a sequential fashion forming a multimeric L10(L12)X complex. Post-translationally, one or more lysine residues are methylated.

Its function is as follows. Forms part of the ribosomal stalk which helps the ribosome interact with GTP-bound translation factors. This Mycolicibacterium gilvum (strain PYR-GCK) (Mycobacterium gilvum (strain PYR-GCK)) protein is Large ribosomal subunit protein uL11.